Reading from the N-terminus, the 116-residue chain is Chondroitin proteoglycan 7 (116 aa).

The first 19 residues, 1 to 19 (MQTITILALIACVAVPIFA), serve as a signal peptide directing secretion. The segment at 29–102 (DVVESSGEGS…NAVVASDSPK (74 aa)) is disordered. 2 stretches are compositionally biased toward low complexity: residues 32–41 (ESSGEGSGES) and 48–58 (VESSGEGSGES). O-linked (Xyl...) (chondroitin sulfate) serine glycosylation is found at Ser-68, Ser-72, Ser-76, Ser-84, and Ser-88.

The protein is Chondroitin proteoglycan 7 of Caenorhabditis elegans.